Reading from the N-terminus, the 748-residue chain is CCR4-NOT transcription complex subunit 10-A (748 aa).

Basic and acidic residues predominate over residues 1-17; it reads MAADKAGEQGAEKHEDS. 4 disordered regions span residues 1 to 25, 184 to 205, 483 to 524, and 605 to 635; these read MAAD…GISD, SNNK…EPFA, KQEN…PPSS, and VSLG…QMPQ. A compositionally biased stretch (low complexity) spans 185-200; it reads NNKNGKNNETNSNANN. Polar residues-rich tracts occupy residues 487-509 and 605-615; these read GSKT…VCSN and VSLGVSSNEQE.

Belongs to the CNOT10 family. Component of the CCR4-NOT complex. cnot10 and cnot11 form a subcomplex docked to the cnot1 scaffold.

It localises to the cytoplasm. The protein resides in the nucleus. Its function is as follows. Component of the CCR4-NOT complex which is one of the major cellular mRNA deadenylases and is linked to various cellular processes including bulk mRNA degradation, miRNA-mediated repression, translational repression during translational initiation and general transcription regulation. Additional complex functions may be a consequence of its influence on mRNA expression. Is not required for association of CNOT7 to the CCR4-NOT complex. This chain is CCR4-NOT transcription complex subunit 10-A (cnot10-a), found in Xenopus laevis (African clawed frog).